Reading from the N-terminus, the 287-residue chain is MQQYLDLARYVLEHGKYRPNRTDTAGIGVFGYQMHFDISKHFPLLTTKKVHWKSIVHELLWFIKGDTNIKYLVDNKVNIWNEWPYESFKKSPHFNGESQKEFIERIRQDAKFAQQFGNLGPVYGKQWRDFNGVDQLKKVIAQIKVNPFSRRLIVSSWNPNEVDQMLLPPCHSLYQFYVQDGQLSCQLYQRSGDIFLGIPFNIASYSLLVYLVAKETNLKPGSFVHTIGDAHIYENHLEQIKLQLTRQPKPLPKVVLKSDKSIFDYQFDDIELVDYDHHPTIKGEVAV.

Residue Arg21 coordinates dUMP. His51 is a binding site for (6R)-5,10-methylene-5,6,7,8-tetrahydrofolate. 150-151 is a dUMP binding site; it reads RR. Cys170 acts as the Nucleophile in catalysis. DUMP is bound by residues 190-193, Asn201, and 231-233; these read RSGD and HIY. Position 193 (Asp193) interacts with (6R)-5,10-methylene-5,6,7,8-tetrahydrofolate. (6R)-5,10-methylene-5,6,7,8-tetrahydrofolate is bound at residue Ala286.

This sequence belongs to the thymidylate synthase family. Bacterial-type ThyA subfamily. Homodimer.

It is found in the cytoplasm. It carries out the reaction dUMP + (6R)-5,10-methylene-5,6,7,8-tetrahydrofolate = 7,8-dihydrofolate + dTMP. It functions in the pathway pyrimidine metabolism; dTTP biosynthesis. Catalyzes the reductive methylation of 2'-deoxyuridine-5'-monophosphate (dUMP) to 2'-deoxythymidine-5'-monophosphate (dTMP) while utilizing 5,10-methylenetetrahydrofolate (mTHF) as the methyl donor and reductant in the reaction, yielding dihydrofolate (DHF) as a by-product. This enzymatic reaction provides an intracellular de novo source of dTMP, an essential precursor for DNA biosynthesis. The chain is Thymidylate synthase from Mycoplasma pneumoniae (strain ATCC 29342 / M129 / Subtype 1) (Mycoplasmoides pneumoniae).